The primary structure comprises 301 residues: NAD kinase 2 (301 aa).

Aspartate 77 serves as the catalytic Proton acceptor. Residues 77-78, arginine 82, 151-152, lysine 162, aspartate 181, and 192-197 each bind NAD(+); these read DG, NE, and TAYAFS.

This sequence belongs to the NAD kinase family. A divalent metal cation is required as a cofactor.

Its subcellular location is the cytoplasm. It carries out the reaction NAD(+) + ATP = ADP + NADP(+) + H(+). Involved in the regulation of the intracellular balance of NAD and NADP, and is a key enzyme in the biosynthesis of NADP. Catalyzes specifically the phosphorylation on 2'-hydroxyl of the adenosine moiety of NAD to yield NADP. The chain is NAD kinase 2 from Streptomyces coelicolor (strain ATCC BAA-471 / A3(2) / M145).